Reading from the N-terminus, the 309-residue chain is Oxygen-dependent coproporphyrinogen-III oxidase (309 aa).

S94 is a substrate binding site. The a divalent metal cation site is built by H98 and H108. H108 serves as the catalytic Proton donor. 110–112 (NVR) contributes to the substrate binding site. 2 residues coordinate a divalent metal cation: H147 and H177. The segment at 242 to 277 (YVEFNLVWDRGTLFGLQTGGRTESILMSLPPLVRWE) is important for dimerization. Residue 260–262 (GGR) participates in substrate binding.

Belongs to the aerobic coproporphyrinogen-III oxidase family. As to quaternary structure, homodimer. A divalent metal cation serves as cofactor.

The protein resides in the cytoplasm. It carries out the reaction coproporphyrinogen III + O2 + 2 H(+) = protoporphyrinogen IX + 2 CO2 + 2 H2O. It functions in the pathway porphyrin-containing compound metabolism; protoporphyrin-IX biosynthesis; protoporphyrinogen-IX from coproporphyrinogen-III (O2 route): step 1/1. Involved in the heme biosynthesis. Catalyzes the aerobic oxidative decarboxylation of propionate groups of rings A and B of coproporphyrinogen-III to yield the vinyl groups in protoporphyrinogen-IX. The chain is Oxygen-dependent coproporphyrinogen-III oxidase from Yersinia pseudotuberculosis serotype O:1b (strain IP 31758).